Here is a 213-residue protein sequence, read N- to C-terminus: Orotate phosphoribosyltransferase (213 aa).

Lysine 26 is a 5-phospho-alpha-D-ribose 1-diphosphate binding site. 34–35 (FF) contacts orotate. 5-phospho-alpha-D-ribose 1-diphosphate contacts are provided by residues 72–73 (YK), arginine 99, lysine 100, lysine 103, histidine 105, and 124–132 (DDVITAGTA). 2 residues coordinate orotate: threonine 128 and arginine 156.

This sequence belongs to the purine/pyrimidine phosphoribosyltransferase family. PyrE subfamily. As to quaternary structure, homodimer. Mg(2+) is required as a cofactor.

The enzyme catalyses orotidine 5'-phosphate + diphosphate = orotate + 5-phospho-alpha-D-ribose 1-diphosphate. Its pathway is pyrimidine metabolism; UMP biosynthesis via de novo pathway; UMP from orotate: step 1/2. Its function is as follows. Catalyzes the transfer of a ribosyl phosphate group from 5-phosphoribose 1-diphosphate to orotate, leading to the formation of orotidine monophosphate (OMP). In Vibrio vulnificus (strain CMCP6), this protein is Orotate phosphoribosyltransferase.